A 478-amino-acid chain; its full sequence is Protein MAINTENANCE OF MERISTEMS (478 aa).

Residues 459 to 478 (ASTTNKRKRREEQQQTDWSE) are disordered. Positions 464–468 (KRKRR) match the Nuclear localization signal motif.

Expressed in root meristem, root vasculature, shoot apical meristem (SAM), leaf vasculature and ovules.

The protein localises to the nucleus. Required for the organization of the root apical meristem (RAM) and the shoot apical meristem (SAM). Required to maintain genome stability and cell division activity in meristematic cells. This chain is Protein MAINTENANCE OF MERISTEMS, found in Arabidopsis thaliana (Mouse-ear cress).